Here is a 308-residue protein sequence, read N- to C-terminus: MATITAAMVKDLRETTGVGMMDCKQALTENDGDMQAAIDWLRKKGLSKAAKKAGRVAAEGLIGALTDKTKGVLVEVNSETDFVARNEQFQGLVKMIAQVALKVGADLDKINAAPVGSSTVATAIADAIATIGENMTLRRAAVLEVGQGLVASYVHNAVTDGAGKLGVIVALESAGKTDELAALGKQLSMHVASANPQALEPAGLDPDVVRREKDVMADKYRQQGKPEAMIEKIVENGLKTYYKEVCLLEQAFIFDEKGKSVAQAVKEAEGRVGAPIKVTGFVRYALGEGIEKQTSDFAAEVAAASGQK.

The segment at 80–83 (TDFV) is involved in Mg(2+) ion dislocation from EF-Tu.

This sequence belongs to the EF-Ts family.

The protein localises to the cytoplasm. Functionally, associates with the EF-Tu.GDP complex and induces the exchange of GDP to GTP. It remains bound to the aminoacyl-tRNA.EF-Tu.GTP complex up to the GTP hydrolysis stage on the ribosome. This is Elongation factor Ts from Rhodopseudomonas palustris (strain BisB18).